The following is a 141-amino-acid chain: Succinate dehydrogenase assembly factor 2, mitochondrial (141 aa).

It belongs to the SDHAF2 family. In terms of assembly, interacts with the flavoprotein subunit within the SDH catalytic dimer.

The protein resides in the mitochondrion matrix. In terms of biological role, plays an essential role in the assembly of succinate dehydrogenase (SDH), an enzyme complex (also referred to as respiratory complex II) that is a component of both the tricarboxylic acid (TCA) cycle and the mitochondrial electron transport chain, and which couples the oxidation of succinate to fumarate with the reduction of ubiquinone (coenzyme Q) to ubiquinol. Required for flavinylation (covalent attachment of FAD) of the flavoprotein subunit of the SDH catalytic dimer. The protein is Succinate dehydrogenase assembly factor 2, mitochondrial of Dictyostelium discoideum (Social amoeba).